The sequence spans 337 residues: Eukaryotic translation initiation factor 3 subunit H (337 aa).

The MPN domain maps to 21–153; sequence VQCDGLAVMK…LKAYRLTPQA (133 aa).

This sequence belongs to the eIF-3 subunit H family. Component of the eukaryotic translation initiation factor 3 (eIF-3) complex. The eIF-3 complex interacts with pix. Interacts with mxt.

It localises to the cytoplasm. In terms of biological role, component of the eukaryotic translation initiation factor 3 (eIF-3) complex, which is involved in protein synthesis of a specialized repertoire of mRNAs and, together with other initiation factors, stimulates binding of mRNA and methionyl-tRNAi to the 40S ribosome. The eIF-3 complex specifically targets and initiates translation of a subset of mRNAs involved in cell proliferation. The protein is Eukaryotic translation initiation factor 3 subunit H of Drosophila willistoni (Fruit fly).